Reading from the N-terminus, the 121-residue chain is NADH-quinone oxidoreductase subunit A (121 aa).

Helical transmembrane passes span 8–28 (YLPI…TIIG), 65–85 (LVAI…PWAI), and 93–113 (QGMI…FYII).

This sequence belongs to the complex I subunit 3 family. In terms of assembly, NDH-1 is composed of 14 different subunits. Subunits NuoA, H, J, K, L, M, N constitute the membrane sector of the complex.

The protein resides in the cell inner membrane. The catalysed reaction is a quinone + NADH + 5 H(+)(in) = a quinol + NAD(+) + 4 H(+)(out). Functionally, NDH-1 shuttles electrons from NADH, via FMN and iron-sulfur (Fe-S) centers, to quinones in the respiratory chain. The immediate electron acceptor for the enzyme in this species is believed to be a menaquinone. Couples the redox reaction to proton translocation (for every two electrons transferred, four hydrogen ions are translocated across the cytoplasmic membrane), and thus conserves the redox energy in a proton gradient. This Flavobacterium psychrophilum (strain ATCC 49511 / DSM 21280 / CIP 103535 / JIP02/86) protein is NADH-quinone oxidoreductase subunit A.